A 241-amino-acid chain; its full sequence is MGFLPIALPFAELEVGQHLYWQIGNLQLHGQVFLTSWIVIGAILALVVVGTRKMERDPHGVQNLLEFLWDYIRDLARTQIGEKAYRDWMPFIGTLFLFIFVSNWGGSLVPWKLIHLPSGELGAPTADINTTVALALLVSLSYFYAGLSRKGLRYFEYYVHPTPIMIPFKIVEDFTKPLSLSFRLFGNILADELVVAVLVFLVPLFLPVPVMFLGLFTSAIQALIFATLAAYYIGEAVEEHH.

5 helical membrane passes run 30–50 (GQVF…VVVG), 91–111 (FIGT…LVPW), 128–148 (INTT…AGLS), 193–213 (LVVA…VMFL), and 214–234 (GLFT…YYIG).

It belongs to the ATPase A chain family. F-type ATPases have 2 components, CF(1) - the catalytic core - and CF(0) - the membrane proton channel. CF(1) has five subunits: alpha(3), beta(3), gamma(1), delta(1), epsilon(1). CF(0) has four main subunits: a, b, b' and c.

The protein localises to the cellular thylakoid membrane. Key component of the proton channel; it plays a direct role in the translocation of protons across the membrane. The protein is ATP synthase subunit a of Prochlorococcus marinus (strain MIT 9303).